The following is a 279-amino-acid chain: Phosphate-binding protein PstS (279 aa).

A signal peptide spans 1–18; that stretch reads MKKVIILIFMLSTSLLYN. Cys19 is lipidated: N-palmitoyl cysteine. Residue Cys19 is the site of S-diacylglycerol cysteine attachment. Residues 33-35, Ser63, and 151-153 contribute to the phosphate site; these read STT and SGS.

The protein belongs to the PstS family. As to quaternary structure, monomer (in vitro). The complex is composed of two ATP-binding proteins (PstB), two transmembrane proteins (PstC and PstA) and a solute-binding protein (PstS).

The protein resides in the cell membrane. Binds inorganic phosphate with a Kd of 1.2 uM. Part of the ABC transporter complex PstSACB involved in phosphate import. This Borreliella burgdorferi (strain ATCC 35210 / DSM 4680 / CIP 102532 / B31) (Borrelia burgdorferi) protein is Phosphate-binding protein PstS.